A 228-amino-acid chain; its full sequence is Protein N-lysine methyltransferase METTL21D (228 aa).

Residue A2 is modified to N-acetylalanine. Residues W43, 75–77, D96, W126, A142, and Y147 contribute to the S-adenosyl-L-methionine site; that span reads GSG.

This sequence belongs to the methyltransferase superfamily. METTL21 family. As to quaternary structure, interacts with ALKBH6. Interacts with ASPSCR1 and UBXN6; interaction with ASPSCR1, but not with UBXN6, enhances VCP methylation. In terms of tissue distribution, widely expressed.

It localises to the cytoplasm. The enzyme catalyses L-lysyl-[protein] + 3 S-adenosyl-L-methionine = N(6),N(6),N(6)-trimethyl-L-lysyl-[protein] + 3 S-adenosyl-L-homocysteine + 3 H(+). In terms of biological role, protein N-lysine methyltransferase that specifically trimethylates 'Lys-315' of VCP/p97; this modification may decrease VCP ATPase activity. The sequence is that of Protein N-lysine methyltransferase METTL21D (Vcpkmt) from Mus musculus (Mouse).